A 313-amino-acid chain; its full sequence is Ribosomal RNA small subunit methyltransferase H (313 aa).

S-adenosyl-L-methionine contacts are provided by residues 35–37 (GGH), Asp-55, Phe-79, Asp-101, and Gln-108.

This sequence belongs to the methyltransferase superfamily. RsmH family.

The protein localises to the cytoplasm. It carries out the reaction cytidine(1402) in 16S rRNA + S-adenosyl-L-methionine = N(4)-methylcytidine(1402) in 16S rRNA + S-adenosyl-L-homocysteine + H(+). Specifically methylates the N4 position of cytidine in position 1402 (C1402) of 16S rRNA. This Escherichia coli O7:K1 (strain IAI39 / ExPEC) protein is Ribosomal RNA small subunit methyltransferase H.